The primary structure comprises 240 residues: MASFTSNASKHQAELTVNRMFADILHTQPLRSAKSTTSNKSKSASKFGNDRKALSMPTPLSSTQILSQQLQPQLQQTRLSLKTGKSSQNNNKVKKLLKKKHEQDKKFQKFIKYSMIKNKMSTDPESLTLEEHKYLKKLAKRNINALQKYSKIDDFEIEQEMSSVKNELLKDLAPKKQTRLRKKLAIPAKKGSARSNANNQINDFDYERKLQKGLISAPGLTPGLAPVDYDDDEEEEEEED.

2 disordered regions span residues 28–67 (QPLR…QILS) and 215–240 (ISAP…EEED). Composition is skewed to low complexity over residues 32–46 (SAKS…SASK) and 58–67 (TPLSSTQILS). Residues 228–240 (DYDDDEEEEEEED) show a composition bias toward acidic residues.

The protein belongs to the RRT14 family.

The protein resides in the nucleus. It is found in the nucleolus. Its function is as follows. Involved in ribosome biogenesis, probably through modulation of rDNA transcription. The chain is Regulator of rDNA transcription 14 (RRT14) from Lodderomyces elongisporus (strain ATCC 11503 / CBS 2605 / JCM 1781 / NBRC 1676 / NRRL YB-4239) (Yeast).